The sequence spans 442 residues: UDP-glycosyltransferase 79B8 (442 aa).

UDP-alpha-D-glucose-binding positions include S260, 319–321 (VQQ), 336–344 (HCGPGTIWE), and 358–361 (LGDQ).

It belongs to the UDP-glycosyltransferase family.

This is UDP-glycosyltransferase 79B8 (UGT79B8) from Arabidopsis thaliana (Mouse-ear cress).